Here is an 89-residue protein sequence, read N- to C-terminus: Small ribosomal subunit protein uS14 (89 aa).

Belongs to the universal ribosomal protein uS14 family. As to quaternary structure, part of the 30S ribosomal subunit. Contacts proteins S3 and S10.

In terms of biological role, binds 16S rRNA, required for the assembly of 30S particles and may also be responsible for determining the conformation of the 16S rRNA at the A site. The polypeptide is Small ribosomal subunit protein uS14 (Onion yellows phytoplasma (strain OY-M)).